The chain runs to 176 residues: Peptide methionine sulfoxide reductase MsrA (176 aa).

Cysteine 10 is an active-site residue.

Belongs to the MsrA Met sulfoxide reductase family.

The catalysed reaction is L-methionyl-[protein] + [thioredoxin]-disulfide + H2O = L-methionyl-(S)-S-oxide-[protein] + [thioredoxin]-dithiol. The enzyme catalyses [thioredoxin]-disulfide + L-methionine + H2O = L-methionine (S)-S-oxide + [thioredoxin]-dithiol. Has an important function as a repair enzyme for proteins that have been inactivated by oxidation. Catalyzes the reversible oxidation-reduction of methionine sulfoxide in proteins to methionine. The sequence is that of Peptide methionine sulfoxide reductase MsrA from Leptospira borgpetersenii serovar Hardjo-bovis (strain L550).